A 468-amino-acid polypeptide reads, in one-letter code: Ribosomal lysine N-methyltransferase 4 (468 aa).

One can recognise an SET domain in the interval 22–302 (EKIGLNDYRH…KGEQLWNTYG (281 aa)). Residues 188-225 (ISNENEKSAAETSIKEDKNGDAAKKNEGSANQDDEKLH) are disordered. Tyr-301 provides a ligand contact to S-adenosyl-L-methionine.

Belongs to the class V-like SAM-binding methyltransferase superfamily. Histone-lysine methyltransferase family. SETD6 subfamily.

Its subcellular location is the nucleus. Its function is as follows. S-adenosyl-L-methionine-dependent protein-lysine N-methyltransferase that monomethylates 60S ribosomal protein L42 (rpl42) at 'Lys-55'. In Schizosaccharomyces pombe (strain 972 / ATCC 24843) (Fission yeast), this protein is Ribosomal lysine N-methyltransferase 4.